The following is a 1279-amino-acid chain: ATP-dependent helicase/nuclease subunit A (1279 aa).

The UvrD-like helicase ATP-binding domain occupies 4-499; the sequence is TKWTDEQRQA…VKLFKNFRSR (496 aa). Residue 25–32 participates in ATP binding; sequence AGAGAGKT. Positions 526–853 constitute a UvrD-like helicase C-terminal domain; sequence EEALKVGASY…RIMSIHKSKG (328 aa).

This sequence belongs to the helicase family. AddA subfamily. Heterodimer of AddA and AddB/RexB. Mg(2+) serves as cofactor.

The catalysed reaction is Couples ATP hydrolysis with the unwinding of duplex DNA by translocating in the 3'-5' direction.. It catalyses the reaction ATP + H2O = ADP + phosphate + H(+). Its function is as follows. The heterodimer acts as both an ATP-dependent DNA helicase and an ATP-dependent, dual-direction single-stranded exonuclease. Recognizes the chi site generating a DNA molecule suitable for the initiation of homologous recombination. The AddA nuclease domain is required for chi fragment generation; this subunit has the helicase and 3' -&gt; 5' nuclease activities. This is ATP-dependent helicase/nuclease subunit A from Clostridium botulinum (strain Loch Maree / Type A3).